The primary structure comprises 590 residues: DNA primase (590 aa).

A CHC2-type zinc finger spans residues 37 to 61 (CPFHKEKTPSFSVSPTKQFYHCFSC). Positions 255–337 (GRILVVEGYM…DKSLHFLFLP (83 aa)) constitute a Toprim domain. Mg(2+) contacts are provided by glutamate 261, aspartate 305, and aspartate 307.

This sequence belongs to the DnaG primase family. In terms of assembly, monomer. Interacts with DnaB. It depends on Zn(2+) as a cofactor. Mg(2+) is required as a cofactor.

It carries out the reaction ssDNA + n NTP = ssDNA/pppN(pN)n-1 hybrid + (n-1) diphosphate.. Functionally, RNA polymerase that catalyzes the synthesis of short RNA molecules used as primers for DNA polymerase during DNA replication. In Neisseria meningitidis serogroup B (strain ATCC BAA-335 / MC58), this protein is DNA primase.